Here is a 1203-residue protein sequence, read N- to C-terminus: Regulator of telomere elongation helicase 1 (1203 aa).

A Helicase ATP-binding domain is found at 7–296 (NGVTVDFPFQ…ARVTQQGELQ (290 aa)). Residue 42-49 (SPTGTGKT) participates in ATP binding. Residues C145, C163, C172, and C207 each contribute to the [4Fe-4S] cluster site. Positions 151-167 (KKQESNHMQISLCRKKV) match the Nuclear localization signal motif. Positions 250–253 (DEAH) match the DEAH box motif. The short motif at 871 to 877 (QKGGRKK) is the Nuclear localization signal element. 2 disordered regions span residues 998–1020 (QLDP…TSKG) and 1120–1203 (TTGK…RSKQ). Residues 1004–1020 (HLNQGQPHLSAHPTSKG) show a composition bias toward polar residues. Residues 1123–1134 (KDLELEGPRDES) show a composition bias toward basic and acidic residues. The PIP-box motif lies at 1160 to 1167 (QSKISSFF). Positions 1169 to 1181 (QRPDESVRSDDTT) are enriched in basic and acidic residues.

It belongs to the helicase family. RAD3/XPD subfamily. In terms of assembly, interacts with TERF1. Interacts (via PIP-box) with PCNA; the interaction is direct and essential for suppressing telomere fragility. Interacts with MMS19; the interaction mediates the association of RTEL1 with the cytosolic iron-sulfur protein assembly (CIA) complex. As to expression, widely expressed. Expressed in spleen, thymus, Peyer patches, kidney, and intestine. Not expressed in brain, heart, lung, skeletal muscles, skin and white fat. In the adult gonad, it is highly expressed in the testis, mainly in the spermatogonia and meiotic spermatocytes.

It localises to the nucleus. It carries out the reaction ATP + H2O = ADP + phosphate + H(+). In terms of biological role, a probable ATP-dependent DNA helicase implicated in telomere-length regulation, DNA repair and the maintenance of genomic stability. Acts as an anti-recombinase to counteract toxic recombination and limit crossover during meiosis. Regulates meiotic recombination and crossover homeostasis by physically dissociating strand invasion events and thereby promotes noncrossover repair by meiotic synthesis dependent strand annealing (SDSA) as well as disassembly of D loop recombination intermediates. Also disassembles T loops and prevents telomere fragility by counteracting telomeric G4-DNA structures, which together ensure the dynamics and stability of the telomere. The protein is Regulator of telomere elongation helicase 1 of Mus musculus (Mouse).